The primary structure comprises 391 residues: Pectin acetylesterase 7 (391 aa).

Positions 1–23 are cleaved as a signal peptide; the sequence is MGRLKQCWSSLLVLAVLVIGTGA. Catalysis depends on charge relay system residues S171, D267, and H334.

It belongs to the pectinacetylesterase family.

It localises to the secreted. It is found in the cell wall. Its function is as follows. Hydrolyzes acetyl esters in homogalacturonan regions of pectin. In type I primary cell wall, galacturonic acid residues of pectin can be acetylated at the O-2 and O-3 positions. Decreasing the degree of acetylation of pectin gels in vitro alters their physical properties. This Arabidopsis thaliana (Mouse-ear cress) protein is Pectin acetylesterase 7.